A 90-amino-acid polypeptide reads, in one-letter code: Probable Fe(2+)-trafficking protein (90 aa).

It belongs to the Fe(2+)-trafficking protein family.

Could be a mediator in iron transactions between iron acquisition and iron-requiring processes, such as synthesis and/or repair of Fe-S clusters in biosynthetic enzymes. This is Probable Fe(2+)-trafficking protein from Vibrio vulnificus (strain CMCP6).